A 194-amino-acid polypeptide reads, in one-letter code: Imidazoleglycerol-phosphate dehydratase (194 aa).

Belongs to the imidazoleglycerol-phosphate dehydratase family.

The protein resides in the cytoplasm. The enzyme catalyses D-erythro-1-(imidazol-4-yl)glycerol 3-phosphate = 3-(imidazol-4-yl)-2-oxopropyl phosphate + H2O. The protein operates within amino-acid biosynthesis; L-histidine biosynthesis; L-histidine from 5-phospho-alpha-D-ribose 1-diphosphate: step 6/9. This Lactiplantibacillus plantarum (strain ATCC BAA-793 / NCIMB 8826 / WCFS1) (Lactobacillus plantarum) protein is Imidazoleglycerol-phosphate dehydratase.